Consider the following 196-residue polypeptide: N-(5'-phosphoribosyl)anthranilate isomerase (196 aa).

This sequence belongs to the TrpF family.

The catalysed reaction is N-(5-phospho-beta-D-ribosyl)anthranilate = 1-(2-carboxyphenylamino)-1-deoxy-D-ribulose 5-phosphate. The protein operates within amino-acid biosynthesis; L-tryptophan biosynthesis; L-tryptophan from chorismate: step 3/5. This chain is N-(5'-phosphoribosyl)anthranilate isomerase, found in Sulfurovum sp. (strain NBC37-1).